A 283-amino-acid polypeptide reads, in one-letter code: Formamidopyrimidine-DNA glycosylase (283 aa).

Residue Pro2 is the Schiff-base intermediate with DNA of the active site. Catalysis depends on Glu3, which acts as the Proton donor. Lys58 serves as the catalytic Proton donor; for beta-elimination activity. Positions 100, 119, and 162 each coordinate DNA. Residues 247–283 form an FPG-type zinc finger; sequence DVYGREGEPCRRAGCDGTVQRITQSGRSSFYCAQCQR. The active-site Proton donor; for delta-elimination activity is Arg273.

It belongs to the FPG family. Monomer. Requires Zn(2+) as cofactor.

It carries out the reaction Hydrolysis of DNA containing ring-opened 7-methylguanine residues, releasing 2,6-diamino-4-hydroxy-5-(N-methyl)formamidopyrimidine.. The catalysed reaction is 2'-deoxyribonucleotide-(2'-deoxyribose 5'-phosphate)-2'-deoxyribonucleotide-DNA = a 3'-end 2'-deoxyribonucleotide-(2,3-dehydro-2,3-deoxyribose 5'-phosphate)-DNA + a 5'-end 5'-phospho-2'-deoxyribonucleoside-DNA + H(+). Functionally, involved in base excision repair of DNA damaged by oxidation or by mutagenic agents. Acts as a DNA glycosylase that recognizes and removes damaged bases. Has a preference for oxidized purines, such as 7,8-dihydro-8-oxoguanine (8-oxoG). Has AP (apurinic/apyrimidinic) lyase activity and introduces nicks in the DNA strand. Cleaves the DNA backbone by beta-delta elimination to generate a single-strand break at the site of the removed base with both 3'- and 5'-phosphates. The protein is Formamidopyrimidine-DNA glycosylase of Ruegeria pomeroyi (strain ATCC 700808 / DSM 15171 / DSS-3) (Silicibacter pomeroyi).